The primary structure comprises 244 residues: Putative nucleosome assembly protein C36B7.08c (244 aa).

A disordered region spans residues 199–244 (EAMTEEASDEDESVDLEEDEEEEDEEDEEGDEEKQEPPSKKSKKSN). Residues 201–232 (MTEEASDEDESVDLEEDEEEEDEEDEEGDEEK) are compositionally biased toward acidic residues. Ser-211 bears the Phosphoserine mark.

Belongs to the nucleosome assembly protein (NAP) family.

The protein localises to the nucleus. The protein is Putative nucleosome assembly protein C36B7.08c of Schizosaccharomyces pombe (strain 972 / ATCC 24843) (Fission yeast).